Reading from the N-terminus, the 574-residue chain is Glutamate--tRNA ligase (574 aa).

Residues proline 109–asparagine 119 carry the 'HIGH' region motif.

The protein belongs to the class-I aminoacyl-tRNA synthetase family. Glutamate--tRNA ligase type 2 subfamily.

The protein localises to the cytoplasm. The enzyme catalyses tRNA(Glu) + L-glutamate + ATP = L-glutamyl-tRNA(Glu) + AMP + diphosphate. Its function is as follows. Catalyzes the attachment of glutamate to tRNA(Glu) in a two-step reaction: glutamate is first activated by ATP to form Glu-AMP and then transferred to the acceptor end of tRNA(Glu). This chain is Glutamate--tRNA ligase, found in Aeropyrum pernix (strain ATCC 700893 / DSM 11879 / JCM 9820 / NBRC 100138 / K1).